The following is a 130-amino-acid chain: Fluoride-specific ion channel FluC (130 aa).

Helical transmembrane passes span 7–27, 36–56, 69–89, and 99–119; these read VLAI…LGLW, LGTL…VAVF, ALIT…AEVV, and LGFG…LAGI. 2 residues coordinate Na(+): Gly76 and Thr79.

Belongs to the fluoride channel Fluc/FEX (TC 1.A.43) family.

The protein resides in the cell inner membrane. The catalysed reaction is fluoride(in) = fluoride(out). Its activity is regulated as follows. Na(+) is not transported, but it plays an essential structural role and its presence is essential for fluoride channel function. Functionally, fluoride-specific ion channel. Important for reducing fluoride concentration in the cell, thus reducing its toxicity. The protein is Fluoride-specific ion channel FluC of Albidiferax ferrireducens (strain ATCC BAA-621 / DSM 15236 / T118) (Rhodoferax ferrireducens).